The primary structure comprises 237 residues: tRNA (guanine-N(1)-)-methyltransferase (237 aa).

S-adenosyl-L-methionine is bound by residues Gly-112 and 132-137; that span reads IGDFVL.

The protein belongs to the RNA methyltransferase TrmD family. As to quaternary structure, homodimer.

It is found in the cytoplasm. The catalysed reaction is guanosine(37) in tRNA + S-adenosyl-L-methionine = N(1)-methylguanosine(37) in tRNA + S-adenosyl-L-homocysteine + H(+). Specifically methylates guanosine-37 in various tRNAs. The chain is tRNA (guanine-N(1)-)-methyltransferase from Thermosynechococcus vestitus (strain NIES-2133 / IAM M-273 / BP-1).